Reading from the N-terminus, the 38-residue chain is Alpha-amylase (38 aa).

This sequence belongs to the glycosyl hydrolase 13 family. Monomer. Requires Ca(2+) as cofactor. Chloride serves as cofactor. As to expression, expressed by the venom gland.

The protein resides in the secreted. It carries out the reaction Endohydrolysis of (1-&gt;4)-alpha-D-glucosidic linkages in polysaccharides containing three or more (1-&gt;4)-alpha-linked D-glucose units.. In Tityus serrulatus (Brazilian scorpion), this protein is Alpha-amylase.